Consider the following 222-residue polypeptide: Ribosomal RNA small subunit methyltransferase G (222 aa).

Residues glycine 85, leucine 90, 108–110, 136–137, and arginine 150 contribute to the S-adenosyl-L-methionine site; these read DAT and VE.

Belongs to the methyltransferase superfamily. RNA methyltransferase RsmG family.

The protein localises to the cytoplasm. Its function is as follows. Specifically methylates the N7 position of a guanine in 16S rRNA. The protein is Ribosomal RNA small subunit methyltransferase G of Chlorobium phaeobacteroides (strain DSM 266 / SMG 266 / 2430).